The following is a 359-amino-acid chain: DNA ligase (359 aa).

ATP-binding positions include 32–35, Arg39, 55–57, and Glu93; these read EIKY and RVS. Lys34 functions as the N6-AMP-lysine intermediate in the catalytic mechanism. Glu217 is a binding site for a divalent metal cation. ATP contacts are provided by Lys232 and Lys238.

The protein belongs to the ATP-dependent DNA ligase family. Requires a divalent metal cation as cofactor.

The catalysed reaction is ATP + (deoxyribonucleotide)n-3'-hydroxyl + 5'-phospho-(deoxyribonucleotide)m = (deoxyribonucleotide)n+m + AMP + diphosphate.. DNA ligase that seals nicks in double-stranded DNA during DNA replication, DNA recombination and DNA repair in an ATP-dependent reaction. Binds specifically to DNA nicks containing a 3'-OH and a 5'-phosphate group. In Escherichia phage T7 (Bacteriophage T7), this protein is DNA ligase.